Consider the following 213-residue polypeptide: Probable septum site-determining protein MinC (213 aa).

Belongs to the MinC family. Interacts with MinD and FtsZ.

Cell division inhibitor that blocks the formation of polar Z ring septums. Rapidly oscillates between the poles of the cell to destabilize FtsZ filaments that have formed before they mature into polar Z rings. Prevents FtsZ polymerization. This Pseudothermotoga lettingae (strain ATCC BAA-301 / DSM 14385 / NBRC 107922 / TMO) (Thermotoga lettingae) protein is Probable septum site-determining protein MinC.